An 841-amino-acid chain; its full sequence is 27S pre-rRNA (guanosine(2922)-2'-O)-methyltransferase (841 aa).

S-adenosyl-L-methionine is bound by residues Gly-58, Trp-60, Asp-78, Asp-94, and Asp-119. The active-site Proton acceptor is the Lys-159. Residues 360 to 389 adopt a coiled-coil conformation; the sequence is QEKQRLNVKRERRRKNEMKQKELQRMQMNM. A phosphoserine mark is found at Ser-455 and Ser-464. Disordered regions lie at residues 480 to 534 and 565 to 654; these read RDAK…DDEA and NNVE…HSRD. The segment covering 505 to 517 has biased composition (basic and acidic residues); it reads SLEKKEEEGKDYI. Residues 518-534 are compositionally biased toward acidic residues; it reads EDNDDEGVEGDSDDDEA. Ser-529 carries the post-translational modification Phosphoserine. Over residues 574 to 585 the composition is skewed to polar residues; sequence NTVNDGIMSSES. The segment covering 598-607 has biased composition (basic and acidic residues); that stretch reads HEEMHQKQDE. Acidic residues-rich tracts occupy residues 608–621 and 629–641; these read ADSSDESSSDDSDF and ASEEFDSDYDSEE. A compositionally biased stretch (basic and acidic residues) spans 642–654; it reads EKNQTKKEKHSRD.

Belongs to the class I-like SAM-binding methyltransferase superfamily. RNA methyltransferase RlmE family. SPB1 subfamily. In terms of assembly, component of the nucleolar and nucleoplasmic pre-60S ribosomal particle. Interacts with the snoRNA-associated proteins NOP1 and NOP58.

The protein localises to the nucleus. The protein resides in the nucleolus. The catalysed reaction is guanosine(2922) in 27S pre-rRNA + S-adenosyl-L-methionine = 2'-O-methylguanosine(2922) in 27S pre-rRNA + S-adenosyl-L-homocysteine + H(+). In terms of biological role, required for proper assembly of pre-ribosomal particles during the biogenesis of the 60S ribosomal subunit. Specifically methylates the guanosine in position 2922 of the 25S rRNA at the stage of 27S pre-rRNA maturation. Also methylates the uridine in position 2921 in the absence of methylation of this residue guided by snoRNA snR52 at the stage of 35S pre-rRNA maturation. The protein is 27S pre-rRNA (guanosine(2922)-2'-O)-methyltransferase of Saccharomyces cerevisiae (strain ATCC 204508 / S288c) (Baker's yeast).